A 92-amino-acid chain; its full sequence is Small ribosomal subunit protein uS19 (92 aa).

It belongs to the universal ribosomal protein uS19 family.

Functionally, protein S19 forms a complex with S13 that binds strongly to the 16S ribosomal RNA. The sequence is that of Small ribosomal subunit protein uS19 from Orientia tsutsugamushi (strain Boryong) (Rickettsia tsutsugamushi).